Reading from the N-terminus, the 70-residue chain is Kappa-conotoxin-like Sx11.2 (70 aa).

An N-terminal signal peptide occupies residues 1–26 (MMFRVTSVGCLLLVIVFLNLVVPTSA). Intrachain disulfides connect C27–C41, C34–C46, C40–C50, and C45–C54. A 4-carboxyglutamate mark is found at E30, E35, and E44. P53 bears the 4-hydroxyproline mark. P57 is subject to Proline amide. Residues 61–70 (SKLQEFFRQR) constitute a propeptide that is removed on maturation.

It belongs to the conotoxin I2 superfamily. As to expression, expressed by the venom duct.

It localises to the secreted. Its function is as follows. Modulator of potassium channels, specifically up-modulates the calcium and voltage-gated BK channels, has no effect on single channel conductance, but increases the open probability of BK channels. This Conus striolatus (Cone snail) protein is Kappa-conotoxin-like Sx11.2.